Here is a 73-residue protein sequence, read N- to C-terminus: UPF0154 protein MYCGA5700 (73 aa).

Residues 5–25 (LALGLSIPLCLIVGAFVGYFV) form a helical membrane-spanning segment.

Belongs to the UPF0154 family.

It is found in the membrane. This is UPF0154 protein MYCGA5700 from Mycoplasmoides gallisepticum (strain R(low / passage 15 / clone 2)) (Mycoplasma gallisepticum).